The chain runs to 123 residues: Small ribosomal subunit protein uS12c (123 aa).

Belongs to the universal ribosomal protein uS12 family. As to quaternary structure, part of the 30S ribosomal subunit.

Its subcellular location is the plastid. The protein localises to the chloroplast. Its function is as follows. With S4 and S5 plays an important role in translational accuracy. Located at the interface of the 30S and 50S subunits. This is Small ribosomal subunit protein uS12c (rps12) from Chara vulgaris (Common stonewort).